The chain runs to 368 residues: 4-hydroxy-3-methylbut-2-en-1-yl diphosphate synthase (flavodoxin) (368 aa).

Positions 268, 271, 303, and 310 each coordinate [4Fe-4S] cluster.

It belongs to the IspG family. Requires [4Fe-4S] cluster as cofactor.

It catalyses the reaction (2E)-4-hydroxy-3-methylbut-2-enyl diphosphate + oxidized [flavodoxin] + H2O + 2 H(+) = 2-C-methyl-D-erythritol 2,4-cyclic diphosphate + reduced [flavodoxin]. Its pathway is isoprenoid biosynthesis; isopentenyl diphosphate biosynthesis via DXP pathway; isopentenyl diphosphate from 1-deoxy-D-xylulose 5-phosphate: step 5/6. Functionally, converts 2C-methyl-D-erythritol 2,4-cyclodiphosphate (ME-2,4cPP) into 1-hydroxy-2-methyl-2-(E)-butenyl 4-diphosphate. This Listeria monocytogenes serotype 4b (strain F2365) protein is 4-hydroxy-3-methylbut-2-en-1-yl diphosphate synthase (flavodoxin).